The chain runs to 264 residues: Undecaprenyl-diphosphatase (264 aa).

8 helical membrane passes run 1–21 (MTVFQALVLGIIQGLGEFLPI), 40–60 (GLTFDVALHLGTLISIAAFFW), 81–101 (MFWYLVLATVPGAVMGYLLEE), 109–129 (TPLLIGIMLIVMGIFLYWADA), 140–160 (ISMADSLLIGLSQAFAIIPGV), 183–203 (FSFLLSTPIIVGAGLFKLKDI), 211–231 (AFITGVASSALVGFISISFLL), and 239–259 (FALFVWYRLVAGLAVIVLAAA).

Belongs to the UppP family.

Its subcellular location is the cell membrane. It carries out the reaction di-trans,octa-cis-undecaprenyl diphosphate + H2O = di-trans,octa-cis-undecaprenyl phosphate + phosphate + H(+). Catalyzes the dephosphorylation of undecaprenyl diphosphate (UPP). Confers resistance to bacitracin. This chain is Undecaprenyl-diphosphatase, found in Pelotomaculum thermopropionicum (strain DSM 13744 / JCM 10971 / SI).